A 175-amino-acid chain; its full sequence is Ribosome maturation factor RimM (175 aa).

A PRC barrel domain is found at E103–F175.

This sequence belongs to the RimM family. As to quaternary structure, binds ribosomal protein uS19.

The protein localises to the cytoplasm. Functionally, an accessory protein needed during the final step in the assembly of 30S ribosomal subunit, possibly for assembly of the head region. Essential for efficient processing of 16S rRNA. May be needed both before and after RbfA during the maturation of 16S rRNA. It has affinity for free ribosomal 30S subunits but not for 70S ribosomes. This Nitrosococcus oceani (strain ATCC 19707 / BCRC 17464 / JCM 30415 / NCIMB 11848 / C-107) protein is Ribosome maturation factor RimM.